Here is a 148-residue protein sequence, read N- to C-terminus: Gas vesicle protein J (148 aa).

2 disordered regions span residues 1-21 (MTTTPIHPTRPQTNSNRVIPT) and 118-148 (EETTLTANNPEDLQPMYEVNSQEGDNSQLEA). The segment covering 136 to 148 (VNSQEGDNSQLEA) has biased composition (polar residues).

This sequence belongs to the gas vesicle GvpA family. In terms of assembly, interacts with GvpA.

Its subcellular location is the gas vesicle. Functionally, a minor component of the gas vesicle, might be involved in nucleating gas vesicle formation. Gas vesicles (GV) are hollow, gas filled proteinaceous nanostructures. During planktonic growth they allow positioning of the organism at a favorable depth for light or nutrient acquisition. In terms of biological role, cluster expression in E.coli (gvpA1-gvpA2-gvpC-gvpN-gvpJ-gvpK-gvpF-gvpG-gvpV-gvpW) allows cells to float and produces irregularly shaped gas vesicles. This Nostoc sp. (strain PCC 7120 / SAG 25.82 / UTEX 2576) protein is Gas vesicle protein J.